Reading from the N-terminus, the 766-residue chain is MQRAGSSGARGECDISGTGRLRLEQAARLGGRAVHTSPTGGLGARQVAGMSAKERPKGKVIKDSVTLLPCFYFVELPILASSVVSLYFLELTDVFKPVHSGFSCYDRSLSMPYIEPTQEAIPFLMLLSLAFAGPAITIMVGEGILYCCLSKRRNGAGLEPNINAGGCNFNSFLRRAVRFVGVHVVGLCSTALITDIIQLATGYQAPYFLTVCKPMYTSLEGSCKENSYIVEEICSGSDLTVINNGKKSFPSQHATLAAFAAVYVSMYFNSTLTDSSKLLKPLLVFTFIICGIICGLTRITQYKNHPVDVYCGFLIGGGIALYLGLYAVGNFLPSEDSMLQHRDALRSLTDLNQDPSRVLSAKNGSSGDGIAHTEGILNRNHRDASSLTNLKRANADVEIITPRSPMGKESMVTFSNTLPRANTPSVEDPVRRNASIHASMDSARSKQLLTQWKSKNESRKMSLQVMDSEPEGQSPPRSIEMRSSSEPSRVGVNGDHHVPGNQYLKIQPGTVPGCNNSMPAGPRVSIQSRPGSSQLVHIPEETQENISTSPKSSSARAKWLKAAEKTVACNRGNNQPRIMQVIAMSKQQGVLQSSPKNAEGSTVTCTGSIRYKTLTDHEPSGIVRVEAHPENNRPIIQIPSSTEGEGSGSWKWKAPEKSSLRQTYELNDLNRDSESCESLKDSFGSGDRKRKHIDSNEHHHHGITTIRVTPVEGSEIGSETLSVSSSRDSTLRRKGNIILIPERSNSPENTRNIFYKGTSPTRPYKD.

Serine 37 carries the post-translational modification Phosphoserine. Helical transmembrane passes span leucine 68 to phenylalanine 88, alanine 120 to valine 140, phenylalanine 179 to leucine 199, and serine 248 to phenylalanine 268. N-linked (GlcNAc...) asparagine glycosylation is present at asparagine 269. 2 helical membrane passes run lysine 277–threonine 297 and valine 309–glycine 329. Serine 347 is subject to Phosphoserine. Residue asparagine 363 is glycosylated (N-linked (GlcNAc...) asparagine). At serine 386 the chain carries Phosphoserine. An N-linked (GlcNAc...) asparagine glycan is attached at asparagine 433. Serine 439 bears the Phosphoserine mark. Disordered stretches follow at residues serine 454–tyrosine 503 and threonine 510–arginine 529. Asparagine 456 carries an N-linked (GlcNAc...) asparagine glycan. Residues serine 462 and serine 474 each carry the phosphoserine modification. N-linked (GlcNAc...) asparagine glycosylation is found at asparagine 515 and asparagine 545. Residue serine 608 is modified to Phosphoserine. Disordered stretches follow at residues proline 634 to alanine 654, aspartate 672 to threonine 705, and proline 741 to aspartate 766. Residues arginine 688–glycine 702 show a composition bias toward basic residues. A compositionally biased stretch (polar residues) spans arginine 743 to asparagine 752.

It belongs to the PA-phosphatase related phosphoesterase family. Post-translationally, O-glycosylated. Probably at Ser-347. In terms of tissue distribution, specifically expressed in neurons (at protein level).

It localises to the postsynaptic density membrane. Postsynaptic density membrane protein that indirectly regulates glutamatergic synaptic transmission through lysophosphatidic acid (LPA)-mediated signaling pathways. Binds lysophosphatidic acid (LPA) and mediates its internalization into cells. Could act as receptor or a transporter of this lipid at the post-synaptic membrane. Modulates lysophosphatidic acid (LPA) activity in neuron axonal outgrowth during development by attenuating phospholipid-induced axon collapse. The sequence is that of Phospholipid phosphatase-related protein type 4 from Rattus norvegicus (Rat).